The primary structure comprises 1708 residues: Rapamycin-insensitive companion of mTOR (1708 aa).

The tract at residues 1–789 is interaction with NBN; it reads MAAIGRGRSL…DKANLHALIQ (789 aa). Ser21, Ser35, and Ser265 each carry phosphoserine. A Glycyl lysine isopeptide (Lys-Gly) (interchain with G-Cter in ubiquitin) cross-link involves residue Lys274. Residues 521–570 form a ribosome-binding domain region; the sequence is LKDTEEALLINLRDSQVLQHKENLDWDWNLIGTILKWPNVNLRNYKDEQL. The ATP site is built by Asn543, Arg572, and Arg576. Residues 1021–1043 are compositionally biased toward low complexity; the sequence is TLSLNSESTSSRHNSESESAPSS. The disordered stretch occupies residues 1021–1045; sequence TLSLNSESTSSRHNSESESAPSSMF. An N6-acetyllysine mark is found at Lys1092 and Lys1095. Disordered regions lie at residues 1101 to 1198 and 1218 to 1247; these read SLTL…ENTS and SFNT…PTAM. Thr1103 carries the phosphothreonine modification. N6-acetyllysine is present on residues Lys1116, Lys1119, and Lys1125. Thr1135 is modified (phosphothreonine; by RPS6KB1). Residue Ser1138 is modified to Phosphoserine. Positions 1147–1158 are enriched in polar residues; it reads FTSSSAQKSLQL. Ser1161, Ser1218, and Ser1234 each carry phosphoserine. Residues 1221-1239 show a composition bias toward low complexity; sequence TDTTTSGISSMSSSPSRET. Thr1270 bears the Phosphothreonine mark. A phosphoserine mark is found at Ser1273, Ser1277, Ser1281, and Ser1283. A Phosphothreonine modification is found at Thr1294. A phosphoserine mark is found at Ser1301 and Ser1312. At Thr1331 the chain carries Phosphothreonine. Phosphoserine is present on residues Ser1345 and Ser1352. Position 1375 is a phosphothreonine (Thr1375). Position 1384 is a phosphoserine (Ser1384). The residue at position 1385 (Tyr1385) is a Phosphotyrosine. Phosphoserine occurs at positions 1387, 1395, and 1410. Residues His1514, Cys1519, and Cys1522 each coordinate Zn(2+). Phosphoserine occurs at positions 1570, 1573, 1576, and 1591. Position 1651 (Cys1651) interacts with Zn(2+).

This sequence belongs to the RICTOR family. In terms of assembly, component of the mechanistic target of rapamycin complex 2 (mTORC2), consisting in two heterotretramers composed of MTOR, MLST8, RICTOR and MAPKAP1/SIN1. The mTORC2 core complex associates with PRR5/PROTOR1 and/or PRR5L/PROTOR2. Contrary to mTORC1, mTORC2 does not bind to and is not sensitive to FKBP12-rapamycin. Binds directly to MTOR and PRR5 within the TORC2 complex; interaction with MTOR is enhanced by deubiquitination of RICTOR by USP9X. Interaction with MAPKAP1 is not enhanced by RICTOR deubiquitination by USP9X. Interacts with CCDC28B. Interacts with NBN. Interacts with SIK3. Interacts with NCKAP1L. Interacts with ARMH4 (via cytoplasmic tail); this interaction bridges ARMH4 to the mTORC2 complex and inhibits the mTORC2 kinase activity. Interacts with UBXN2A. Interacts with TSPAN8. In terms of processing, phosphorylated by MTOR; when part of mTORC2. Phosphorylated at Thr-1135 by RPS6KB1 downstream of the mTORC1 complex: phosphorylation of RICTOR inhibits mTORC2 signaling by creating a binding site for 14-3-3 proteins. Phosphorylated at Ser-1234 by GSK3B in response to endoplasmic stress, inhibiting mTORC2 signaling. Post-translationally, ubiquitinated by the SCF(FBXW7) complex, leading to its degradation by the proteasome. Deubiquitinated by USP9X; deubiquitination stabilizes RICTOR and enhances its binding to MTOR, thus promoting mTORC2 complex assembly. Acetylated by EP300/p300 in response to glucose, leading to activate the mTORC2 complex. Acetylation by BLOC1S1/GCN5L1 in response to hypotoxic stress protects RICTOR against ubiquitination and subsequent degradation by the proteasome. As to expression, highest levels in liver and brain with expression also detected in heart, muscle, spleen and kidney (at protein level).

Its subcellular location is the cell membrane. The protein localises to the endoplasmic reticulum membrane. It localises to the lysosome membrane. Functionally, component of the mechanistic target of rapamycin complex 2 (mTORC2), which transduces signals from growth factors to pathways involved in proliferation, cytoskeletal organization, lipogenesis and anabolic output. In response to growth factors, mTORC2 phosphorylates and activates AGC protein kinase family members, including AKT (AKT1, AKT2 and AKT3), PKC (PRKCA, PRKCB and PRKCE) and SGK1. In contrast to mTORC1, mTORC2 is nutrient-insensitive. Within the mTORC2 complex, RICTOR probably acts as a molecular adapter. RICTOR is responsible for the FKBP12-rapamycin-insensitivity of mTORC2. mTORC2 plays a critical role in AKT1 activation by mediating phosphorylation of different sites depending on the context, such as 'Thr-450', 'Ser-473', 'Ser-477' or 'Thr-479', facilitating the phosphorylation of the activation loop of AKT1 on 'Thr-308' by PDPK1/PDK1 which is a prerequisite for full activation. mTORC2 catalyzes the phosphorylation of SGK1 at 'Ser-422' and of PRKCA on 'Ser-657'. The mTORC2 complex also phosphorylates various proteins involved in insulin signaling, such as FBXW8 and IGF2BP1. mTORC2 acts upstream of Rho GTPases to regulate the actin cytoskeleton, probably by activating one or more Rho-type guanine nucleotide exchange factors. mTORC2 promotes the serum-induced formation of stress-fibers or F-actin. Plays an essential role in embryonic growth and development. The chain is Rapamycin-insensitive companion of mTOR from Mus musculus (Mouse).